Consider the following 367-residue polypeptide: Queuine tRNA-ribosyltransferase (367 aa).

Asp92 functions as the Proton acceptor in the catalytic mechanism. Substrate contacts are provided by residues 92–96 (DSGGF), Asp146, Gln188, and Gly215. Positions 246 to 252 (GVGTPKD) are RNA binding. Asp265 functions as the Nucleophile in the catalytic mechanism. Zn(2+) contacts are provided by Cys303, Cys305, Cys308, and His334.

The protein belongs to the queuine tRNA-ribosyltransferase family. As to quaternary structure, homodimer. Within each dimer, one monomer is responsible for RNA recognition and catalysis, while the other monomer binds to the replacement base PreQ1. Zn(2+) is required as a cofactor.

The enzyme catalyses 7-aminomethyl-7-carbaguanine + guanosine(34) in tRNA = 7-aminomethyl-7-carbaguanosine(34) in tRNA + guanine. The protein operates within tRNA modification; tRNA-queuosine biosynthesis. Functionally, catalyzes the base-exchange of a guanine (G) residue with the queuine precursor 7-aminomethyl-7-deazaguanine (PreQ1) at position 34 (anticodon wobble position) in tRNAs with GU(N) anticodons (tRNA-Asp, -Asn, -His and -Tyr). Catalysis occurs through a double-displacement mechanism. The nucleophile active site attacks the C1' of nucleotide 34 to detach the guanine base from the RNA, forming a covalent enzyme-RNA intermediate. The proton acceptor active site deprotonates the incoming PreQ1, allowing a nucleophilic attack on the C1' of the ribose to form the product. After dissociation, two additional enzymatic reactions on the tRNA convert PreQ1 to queuine (Q), resulting in the hypermodified nucleoside queuosine (7-(((4,5-cis-dihydroxy-2-cyclopenten-1-yl)amino)methyl)-7-deazaguanosine). This Francisella tularensis subsp. holarctica (strain FTNF002-00 / FTA) protein is Queuine tRNA-ribosyltransferase.